A 118-amino-acid chain; its full sequence is Large ribosomal subunit protein uL18 (118 aa).

Positions 1-25 (MISKPDKNKIRQKRHRRVRGKLSGT) are disordered. The segment covering 10-20 (IRQKRHRRVRG) has biased composition (basic residues).

It belongs to the universal ribosomal protein uL18 family. As to quaternary structure, part of the 50S ribosomal subunit; part of the 5S rRNA/L5/L18/L25 subcomplex. Contacts the 5S and 23S rRNAs.

In terms of biological role, this is one of the proteins that bind and probably mediate the attachment of the 5S RNA into the large ribosomal subunit, where it forms part of the central protuberance. This Streptococcus pyogenes serotype M5 (strain Manfredo) protein is Large ribosomal subunit protein uL18.